A 526-amino-acid polypeptide reads, in one-letter code: Glutamate--cysteine ligase (526 aa).

The protein belongs to the glutamate--cysteine ligase type 1 family. Type 1 subfamily.

It catalyses the reaction L-cysteine + L-glutamate + ATP = gamma-L-glutamyl-L-cysteine + ADP + phosphate + H(+). Its pathway is sulfur metabolism; glutathione biosynthesis; glutathione from L-cysteine and L-glutamate: step 1/2. The sequence is that of Glutamate--cysteine ligase from Shewanella amazonensis (strain ATCC BAA-1098 / SB2B).